The chain runs to 260 residues: Caveolae-associated protein 3 (260 aa).

Residues 1–84 (MGESALESGP…SNTLAQLLAK (84 aa)) form an interaction with CAVIN1 region. A leucine-zipper region spans residues 20–78 (VHAVTVVTLLEKLATMLETLRERQGGLAQRQGGLAGSVRRIQSNLGALSRSHDTTSNTL). Residues Ser-62 and Ser-70 each carry the phosphoserine modification. Lys-128 participates in a covalent cross-link: Glycyl lysine isopeptide (Lys-Gly) (interchain with G-Cter in SUMO2). Positions 135-201 (AKAFQKAPEP…SGRKGHAAPT (67 aa)) are interaction with CAV1. Residues 140–260 (KAPEPLGPVE…AAVLQVESAA (121 aa)) form a disordered region. The span at 157–168 (AEAEESSDEEEP) shows a compositional bias: acidic residues. Ser-162, Ser-163, and Ser-171 each carry phosphoserine. Over residues 201–210 (TPTPVKPPRL) the composition is skewed to pro residues.

It belongs to the CAVIN family. As to quaternary structure, component of the CAVIN complex composed of CAVIN1, CAVIN2, CAVIN3 and CAVIN4. Interacts with PRKCD and with phosphatidylserine. Phosphatidylserine may form a bridge between PKC and PKC-binding partners and stabilize the binding. Interacts with PER2. Interacts with CAVIN1 and EPS15L1. Interacts (via leucine-zipper domain) with CAV1 in a cholesterol-sensitive manner. In terms of processing, in vitro, phosphorylated by PRKCD.

The protein resides in the cytoplasm. The protein localises to the membrane. It localises to the caveola. Its subcellular location is the cytosol. Functionally, regulates the traffic and/or budding of caveolae. Plays a role in caveola formation in a tissue-specific manner. Required for the formation of caveolae in smooth muscle but not in the lung and heart endothelial cells. Regulates the equilibrium between cell surface-associated and cell surface-dissociated caveolae by promoting the rapid release of caveolae from the cell surface. Plays a role in the regulation of the circadian clock. Modulates the period length and phase of circadian gene expression and also regulates expression and interaction of the core clock components PER1/2 and CRY1/2. This chain is Caveolae-associated protein 3 (CAVIN3), found in Bos taurus (Bovine).